A 538-amino-acid polypeptide reads, in one-letter code: Phosphoenolpyruvate carboxykinase (ATP) (538 aa).

Substrate contacts are provided by Arg64, Tyr206, and Lys212. ATP contacts are provided by residues Lys212, His231, and 247–255; that span reads GLSGTGKTT. 2 residues coordinate Mn(2+): Lys212 and His231. Asp268 provides a ligand contact to Mn(2+). Residues Glu296, Arg332, 448–449, and Thr454 contribute to the ATP site; that span reads RI. Substrate is bound at residue Arg332.

Belongs to the phosphoenolpyruvate carboxykinase (ATP) family. In terms of assembly, monomer. It depends on Mn(2+) as a cofactor.

The protein resides in the cytoplasm. The catalysed reaction is oxaloacetate + ATP = phosphoenolpyruvate + ADP + CO2. It participates in carbohydrate biosynthesis; gluconeogenesis. Functionally, involved in the gluconeogenesis. Catalyzes the conversion of oxaloacetate (OAA) to phosphoenolpyruvate (PEP) through direct phosphoryl transfer between the nucleoside triphosphate and OAA. The protein is Phosphoenolpyruvate carboxykinase (ATP) of Enterobacter sp. (strain 638).